The sequence spans 541 residues: MAKTIAYDEEARRGLERGLNSLADAVKVTLGPKGRNVVLEKKWGAPTITNDGVSIAKEIELEDPYEKIGAELVKEVAKKTDDVAGDGTTTATVLAQALVREGLRNVAAGANPLGLKRGIEKAVEKVTETLLKSAKEVETKEQIAATAGISAGDQSIGDLIAEAMDKVGNEGVITVEESNTFGLQLELTEGMRFDKGYISGYFVTDAERQEAVLEDPYILLVSSKVSTVKDLLPLLEKVIQSGKPLLIIAEDVEGEALSTLVVNKIRGTFKSVAVKAPGFGDRRKAMLQDMAILTGGQVISEEVGLSLETADVSLLGKARKVVVTKDETTIVEGAGDAEAIQGRVAQIRAEIENSDSDYDREKLQERLAKLAGGVAVIKAGAATEVELKERKHRIEDAVRNAKAAVEEGIVAGGGVALLQSAPSLEELSLTGDEATGANIVRVALSAPLKQIALNGGLEPGVVAEKVSNLPAGHGLNAATGEYEDLLAAGVADPVKVTRSALQNAASIAALFLTTEAVVADKPEKAAAPAGDPTGGMGGMDF.

ATP-binding positions include 29 to 32 and 86 to 90; these read TLGP and DGTTT. K132 participates in a covalent cross-link: Isoglutamyl lysine isopeptide (Lys-Gln) (interchain with Q-Cter in protein Pup). Residues G413, 476-478, and D492 contribute to the ATP site; that span reads NAA.

It belongs to the chaperonin (HSP60) family. As to quaternary structure, forms a cylinder of 14 subunits composed of two heptameric rings stacked back-to-back. Interacts with the co-chaperonin GroES.

The protein resides in the secreted. The protein localises to the capsule. It is found in the cell surface. Its subcellular location is the cell wall. The catalysed reaction is ATP + H2O + a folded polypeptide = ADP + phosphate + an unfolded polypeptide.. Its function is as follows. Together with its co-chaperonin GroES, plays an essential role in assisting protein folding. The GroEL-GroES system forms a nano-cage that allows encapsulation of the non-native substrate proteins and provides a physical environment optimized to promote and accelerate protein folding. The polypeptide is Chaperonin GroEL 2 (Mycolicibacterium smegmatis (strain ATCC 700084 / mc(2)155) (Mycobacterium smegmatis)).